We begin with the raw amino-acid sequence, 136 residues long: Translation initiation factor 5A (136 aa).

Lys-37 bears the Hypusine mark.

This sequence belongs to the eIF-5A family.

The protein localises to the cytoplasm. Functions by promoting the formation of the first peptide bond. This is Translation initiation factor 5A from Thermococcus kodakarensis (strain ATCC BAA-918 / JCM 12380 / KOD1) (Pyrococcus kodakaraensis (strain KOD1)).